A 368-amino-acid polypeptide reads, in one-letter code: Phosphate acyltransferase (368 aa).

It belongs to the PlsX family. As to quaternary structure, homodimer. Probably interacts with PlsY.

It localises to the cytoplasm. The enzyme catalyses a fatty acyl-[ACP] + phosphate = an acyl phosphate + holo-[ACP]. The protein operates within lipid metabolism; phospholipid metabolism. Catalyzes the reversible formation of acyl-phosphate (acyl-PO(4)) from acyl-[acyl-carrier-protein] (acyl-ACP). This enzyme utilizes acyl-ACP as fatty acyl donor, but not acyl-CoA. The protein is Phosphate acyltransferase of Cereibacter sphaeroides (strain ATCC 17025 / ATH 2.4.3) (Rhodobacter sphaeroides).